Reading from the N-terminus, the 69-residue chain is Iota-conotoxin LtIIIA (69 aa).

Positions 1–20 (MLKMGVLLFTFLVLFPLTTL) are cleaved as a signal peptide. Positions 21–52 (ELDTDRPVERHAAIKQDLKPQERRGIRLHAPR) are excised as a propeptide. Residues Glu54 and Glu57 each carry the 4-carboxyglutamate modification. 3 disulfide bridges follow: Cys55-Cys67, Cys56-Cys65, and Cys61-Cys68. Position 58 is a 4-hydroxyproline (Pro58).

Expressed by the venom duct.

It localises to the secreted. In terms of biological role, iota-conotoxins bind to voltage-gated sodium channels and act as agonists by shifting the voltage-dependence of activation to more hyperpolarized levels. This toxin enhances tetrodotoxin-sensitive sodium current in rat dorsal root ganglion neurons. This is Iota-conotoxin LtIIIA from Conus litteratus (Lettered cone).